A 316-amino-acid polypeptide reads, in one-letter code: Golgi to ER traffic protein 2 (316 aa).

The segment at 1–75 (MATELSDAEK…SDEEVEKSTK (75 aa)) is disordered. Residues 1 to 167 (MATELSDAEK…LKYYKFKVSK (167 aa)) are Cytoplasmic-facing. The segment covering 7–19 (DAEKRKLLRERRQ) has biased composition (basic and acidic residues). Composition is skewed to polar residues over residues 22 to 48 (FSNGGASSRLNKITGQQQNSFLSSTSV) and 56 to 65 (PSGNKKSSNV). Residues 168–187 (LKSYIILIKWALLAPYVYFI) traverse the membrane as a helical segment. At 188 to 209 (MHPNPTVLQASNLLSQIVERSN) the chain is on the lumenal side. Residues 210 to 229 (FFSIFTGLEIVFISIYYQML) traverse the membrane as a helical segment. Over 230–276 (KKLQRDNNVTATQNAGGILKYLTMIPEGILPIRNIQGKIGLALEYFD) the chain is Cytoplasmic. A helical membrane pass occupies residues 277 to 297 (VASMYVTDICFVLVLFGVMKY). At 298–316 (YHSSFPISVPIEPPIAGIQ) the chain is on the lumenal side.

It belongs to the GET2 family. In terms of assembly, component of the Golgi to ER traffic (GET) complex, which is composed of GET1, GET2 and GET3. Within the complex, GET1 and GET2 form a heterotetramer which is stabilized by phosphatidylinositol binding and which binds to the GET3 homodimer.

The protein resides in the endoplasmic reticulum membrane. It localises to the golgi apparatus membrane. Required for the post-translational delivery of tail-anchored (TA) proteins to the endoplasmic reticulum. Together with GET1, acts as a membrane receptor for soluble GET3, which recognizes and selectively binds the transmembrane domain of TA proteins in the cytosol. The GET complex cooperates with the HDEL receptor ERD2 to mediate the ATP-dependent retrieval of resident ER proteins that contain a C-terminal H-D-E-L retention signal from the Golgi to the ER. The chain is Golgi to ER traffic protein 2 from Kluyveromyces lactis (strain ATCC 8585 / CBS 2359 / DSM 70799 / NBRC 1267 / NRRL Y-1140 / WM37) (Yeast).